Here is a 146-residue protein sequence, read N- to C-terminus: Wheatwin-1 (146 aa).

The signal sequence occupies residues 1–21 (MAARPMLVVALLCAAAAAATA). Pyrrolidone carboxylic acid is present on Gln-22. Residues 22–146 (QQATNVRATY…VNYQFVDCRD (125 aa)) form the Barwin domain. Disulfide bonds link Cys-52/Cys-84, Cys-73/Cys-107, and Cys-87/Cys-144.

In terms of assembly, monomer.

Its activity is regulated as follows. Inhibited by 5'-ADP. Functionally, shows antifungal activity towards B.cinerea and towards the wheat-specific pathogenic fungi F.culmorum and F.graminearum (groups 1 and 2). Has ribonuclease activity. This Triticum aestivum (Wheat) protein is Wheatwin-1 (PR4A).